The chain runs to 461 residues: Tubulin gamma chain (461 aa).

GTP is bound at residue 142 to 148 (AGGTGSG).

Belongs to the tubulin family.

It is found in the cytoplasm. It localises to the cytoskeleton. The protein localises to the microtubule organizing center. The protein resides in the spindle pole body. Functionally, tubulin is the major constituent of microtubules. The gamma chain is found at microtubule organizing centers (MTOC) such as the spindle poles or the centrosome, suggesting that it is involved in the minus-end nucleation of microtubule assembly. The chain is Tubulin gamma chain (tbg) from Neurospora crassa (strain ATCC 24698 / 74-OR23-1A / CBS 708.71 / DSM 1257 / FGSC 987).